We begin with the raw amino-acid sequence, 184 residues long: Protein N-terminal glutamine amidohydrolase (184 aa).

Active-site residues include cysteine 14, histidine 63, and aspartate 78.

The protein belongs to the NTAQ1 family. As to quaternary structure, monomer.

It catalyses the reaction N-terminal L-glutaminyl-[protein] + H2O = N-terminal L-glutamyl-[protein] + NH4(+). In terms of biological role, mediates the side-chain deamidation of N-terminal glutamine residues to glutamate, an important step in N-end rule pathway of protein degradation. Conversion of the resulting N-terminal glutamine to glutamate renders the protein susceptible to arginylation, polyubiquitination and degradation as specified by the N-end rule. Does not act on substrates with internal or C-terminal glutamine and does not act on non-glutamine residues in any position. The sequence is that of Protein N-terminal glutamine amidohydrolase from Caenorhabditis elegans.